We begin with the raw amino-acid sequence, 179 residues long: Large ribosomal subunit protein uL5 (179 aa).

Belongs to the universal ribosomal protein uL5 family. As to quaternary structure, part of the 50S ribosomal subunit; part of the 5S rRNA/L5/L18/L25 subcomplex. Contacts the 5S rRNA and the P site tRNA. Forms a bridge to the 30S subunit in the 70S ribosome.

In terms of biological role, this is one of the proteins that bind and probably mediate the attachment of the 5S RNA into the large ribosomal subunit, where it forms part of the central protuberance. In the 70S ribosome it contacts protein S13 of the 30S subunit (bridge B1b), connecting the 2 subunits; this bridge is implicated in subunit movement. Contacts the P site tRNA; the 5S rRNA and some of its associated proteins might help stabilize positioning of ribosome-bound tRNAs. This Shewanella putrefaciens (strain CN-32 / ATCC BAA-453) protein is Large ribosomal subunit protein uL5.